The primary structure comprises 188 residues: Elongation factor P (188 aa).

The protein belongs to the elongation factor P family.

The protein resides in the cytoplasm. It participates in protein biosynthesis; polypeptide chain elongation. Involved in peptide bond synthesis. Stimulates efficient translation and peptide-bond synthesis on native or reconstituted 70S ribosomes in vitro. Probably functions indirectly by altering the affinity of the ribosome for aminoacyl-tRNA, thus increasing their reactivity as acceptors for peptidyl transferase. The sequence is that of Elongation factor P from Gluconobacter oxydans (strain 621H) (Gluconobacter suboxydans).